The primary structure comprises 159 residues: Ribosomal RNA large subunit methyltransferase H (159 aa).

S-adenosyl-L-methionine contacts are provided by residues Leu-76, Gly-107, and 126-131; that span reads LSKLTM.

This sequence belongs to the RNA methyltransferase RlmH family. Homodimer.

It is found in the cytoplasm. The catalysed reaction is pseudouridine(1915) in 23S rRNA + S-adenosyl-L-methionine = N(3)-methylpseudouridine(1915) in 23S rRNA + S-adenosyl-L-homocysteine + H(+). Specifically methylates the pseudouridine at position 1915 (m3Psi1915) in 23S rRNA. This chain is Ribosomal RNA large subunit methyltransferase H, found in Acinetobacter baumannii (strain SDF).